Consider the following 434-residue polypeptide: Trigger factor (434 aa).

In terms of domain architecture, PPIase FKBP-type spans 161 to 246 (EDRVTVDFNG…LKKVEERELP (86 aa)).

Belongs to the FKBP-type PPIase family. Tig subfamily.

It is found in the cytoplasm. The enzyme catalyses [protein]-peptidylproline (omega=180) = [protein]-peptidylproline (omega=0). In terms of biological role, involved in protein export. Acts as a chaperone by maintaining the newly synthesized protein in an open conformation. Functions as a peptidyl-prolyl cis-trans isomerase. This is Trigger factor from Proteus mirabilis (strain HI4320).